The following is a 543-amino-acid chain: Probable protein kinase UbiB (543 aa).

Residues 123 to 501 enclose the Protein kinase domain; the sequence is DFDSQALASA…GSRQGRARYL (379 aa). Residues 129 to 137 and lysine 152 contribute to the ATP site; that span reads LASASIAQV. Catalysis depends on aspartate 287, which acts as the Proton acceptor. The chain crosses the membrane as a helical span at residues 517–537; it reads MVNIALWPIGLYVAGGVIWLA.

It belongs to the ABC1 family. UbiB subfamily.

Its subcellular location is the cell inner membrane. It participates in cofactor biosynthesis; ubiquinone biosynthesis [regulation]. Is probably a protein kinase regulator of UbiI activity which is involved in aerobic coenzyme Q (ubiquinone) biosynthesis. The sequence is that of Probable protein kinase UbiB from Edwardsiella ictaluri (strain 93-146).